A 196-amino-acid chain; its full sequence is Putative archaetidylserine decarboxylase proenzyme (196 aa).

Catalysis depends on S164, which acts as the Schiff-base intermediate with substrate; via pyruvic acid. Position 164 is a pyruvic acid (Ser); by autocatalysis (S164).

The protein belongs to the phosphatidylserine decarboxylase family. PSD-A subfamily. Heterodimer of a large membrane-associated beta subunit and a small pyruvoyl-containing alpha subunit. Pyruvate is required as a cofactor. In terms of processing, is synthesized initially as an inactive proenzyme. Formation of the active enzyme involves a self-maturation process in which the active site pyruvoyl group is generated from an internal serine residue via an autocatalytic post-translational modification. Two non-identical subunits are generated from the proenzyme in this reaction, and the pyruvate is formed at the N-terminus of the alpha chain, which is derived from the carboxyl end of the proenzyme. The post-translation cleavage follows an unusual pathway, termed non-hydrolytic serinolysis, in which the side chain hydroxyl group of the serine supplies its oxygen atom to form the C-terminus of the beta chain, while the remainder of the serine residue undergoes an oxidative deamination to produce ammonia and the pyruvoyl prosthetic group on the alpha chain.

The protein resides in the cell membrane. It carries out the reaction archaetidylserine + H(+) = archaetidylethanolamine + CO2. Functionally, catalyzes the formation of archaetidylethanolamine (PtdEtn) from archaetidylserine (PtdSer). This Halobacterium salinarum (strain ATCC 700922 / JCM 11081 / NRC-1) (Halobacterium halobium) protein is Putative archaetidylserine decarboxylase proenzyme.